Here is a 421-residue protein sequence, read N- to C-terminus: U-box domain-containing protein 25 (421 aa).

In terms of domain architecture, U-box spans 13-88 (QIPYHFRCPI…QEWCVANRSN (76 aa)).

It carries out the reaction S-ubiquitinyl-[E2 ubiquitin-conjugating enzyme]-L-cysteine + [acceptor protein]-L-lysine = [E2 ubiquitin-conjugating enzyme]-L-cysteine + N(6)-ubiquitinyl-[acceptor protein]-L-lysine.. Its pathway is protein modification; protein ubiquitination. Functionally, functions as an E3 ubiquitin ligase. The protein is U-box domain-containing protein 25 (PUB25) of Arabidopsis thaliana (Mouse-ear cress).